Consider the following 115-residue polypeptide: Putative septation protein SpoVG (115 aa).

The disordered stretch occupies residues 88–115; it reads PGTIATSEVSSQLEESDSDKTLSEDLKA. A compositionally biased stretch (polar residues) spans 91–100; it reads IATSEVSSQL. Residues 105–115 show a composition bias toward basic and acidic residues; it reads SDKTLSEDLKA.

Belongs to the SpoVG family.

In terms of biological role, could be involved in septation. The polypeptide is Putative septation protein SpoVG (Macrococcus caseolyticus (strain JCSC5402) (Macrococcoides caseolyticum)).